A 357-amino-acid chain; its full sequence is MAQHRVVLLPGDGIGPEITAVARQLLEVVSRRHGFSLSFEEQPIGGSAIDATGEPLPASTLDACKAADAVLLAAIGSPCFDSLPREKRPETGLLGLRAGMELFANLRPVKIVPALIDASSLKREVIEGVDLMVVRELTGGIYFGQPKGRIETEGDERGFNTMTYSASEVDRIAKVAFEIAQERRGRLCSVDKANVLDVSQLWRDRVDAMAPSYGPVEVSHMYVDNAAMQLVRDPRQFDVLLTGNLFGDILSDEAAMLTGSIGMLPSASLGSEGPGLFEPVHGSAPDIAGQDKANPMAMVLSAAMMLRIGLKQAAAADDLEAAVDAVLAGGFRTGDLMAEGCTQLGCRAMGEQLLKAL.

Substrate-binding residues include arginine 97, arginine 107, arginine 135, and aspartate 224. Residues aspartate 224, aspartate 248, and aspartate 252 each coordinate Mg(2+). 282–294 (GSAPDIAGQDKAN) provides a ligand contact to NAD(+).

It belongs to the isocitrate and isopropylmalate dehydrogenases family. LeuB type 1 subfamily. In terms of assembly, homodimer. Requires Mg(2+) as cofactor. Mn(2+) is required as a cofactor.

The protein resides in the cytoplasm. The enzyme catalyses (2R,3S)-3-isopropylmalate + NAD(+) = 4-methyl-2-oxopentanoate + CO2 + NADH. It functions in the pathway amino-acid biosynthesis; L-leucine biosynthesis; L-leucine from 3-methyl-2-oxobutanoate: step 3/4. Its function is as follows. Catalyzes the oxidation of 3-carboxy-2-hydroxy-4-methylpentanoate (3-isopropylmalate) to 3-carboxy-4-methyl-2-oxopentanoate. The product decarboxylates to 4-methyl-2 oxopentanoate. The chain is 3-isopropylmalate dehydrogenase from Synechococcus sp. (strain CC9605).